Consider the following 601-residue polypeptide: Potassium-transporting ATPase potassium-binding subunit (601 aa).

12 helical membrane passes run 3-23 (ASAW…AWPL), 62-82 (HYAL…YALQ), 132-152 (LGLS…AFAL), 179-199 (AWVL…QGVI), 283-303 (LTNL…CFAF), 314-334 (VAIL…VTAA), 367-387 (FGIS…CGAV), 397-417 (LGGM…GGAG), 419-439 (GLYG…LMIG), 459-479 (VAIL…VLAP), 523-543 (VLLA…VLAI), and 564-584 (GPLF…LNYV).

This sequence belongs to the KdpA family. The system is composed of three essential subunits: KdpA, KdpB and KdpC.

It is found in the cell inner membrane. In terms of biological role, part of the high-affinity ATP-driven potassium transport (or Kdp) system, which catalyzes the hydrolysis of ATP coupled with the electrogenic transport of potassium into the cytoplasm. This subunit binds the periplasmic potassium ions and delivers the ions to the membrane domain of KdpB through an intramembrane tunnel. This is Potassium-transporting ATPase potassium-binding subunit from Paracidovorax citrulli (strain AAC00-1) (Acidovorax citrulli).